We begin with the raw amino-acid sequence, 327 residues long: MPGPTQTLSPNGENNNDVIHDNGTIIPFRKHTVRGERSYSWGMAVNVYSTSITQETMSRHDIIAWVNDIVCLNYIKVEQLSSGAAYCQFMDMLFPGCISLKKVKFQAKLEHEYIHNFKLLQASFKRMNVDKVIPVEKLVKGRFQDNLDFIQWFKKFFDANYDGKEYDPMEARQGQDALPPPDPGEQIFNLPKKPHHANSPTAGAARSSPIAKPGSTSSRPSSAKKAVPCPSVKSDKDLETQVSHLNEQVHSLKIALEGVEKERDFYFGKLREIELLCQEHGQEGDDLLQRLMDILYSSEEQESHTEQHEGEEEQEHGHEEAEQQEEY.

Residues 1-17 (MPGPTQTLSPNGENNND) are compositionally biased toward polar residues. Positions 1–20 (MPGPTQTLSPNGENNNDVIH) are disordered. In terms of domain architecture, Calponin-homology (CH) spans 56 to 158 (TMSRHDIIAW…FIQWFKKFFD (103 aa)). Disordered stretches follow at residues 170 to 238 (EARQ…DKDL) and 295 to 327 (LYSS…QEEY). Residues 234-304 (SDKDLETQVS…LYSSEEQESH (71 aa)) form the EB1 C-terminal domain.

The protein belongs to the MAPRE family.

Its subcellular location is the cytoplasm. The protein resides in the cytoskeleton. May be involved in microtubule polymerization, and spindle function by stabilizing microtubules and anchoring them at centrosomes. The polypeptide is Microtubule-associated protein RP/EB family member 2 (mapre2) (Xenopus laevis (African clawed frog)).